The following is a 277-amino-acid chain: MADPWQECMDYAVTLARQAGEVVCEAIKNEMNVMLKSSPVDLVTATDQKVEKMLISSIKEKYPSHSFIGEESVAAGEKSILTDNPTWIIDPIDGTTNFVHRFPFVAVSIGFAVNKKIEFGVVYSCVEGKMYTARKGKGAFCNGQKLQVSQQEDITKSLLVTELGSSRTPETVRIVLSNMEKLFCIPVHGIRSVGTAAVNMCLVATGGADAYYEMGIHCWDVAGAGIIVTEAGGVLMDVTGGPFDLMSRRVIAANNRILAERIAKEIQVIPLQRDDED.

Mg(2+)-binding residues include Glu-70, Asp-90, Ile-92, and Asp-93. Glu-70 serves as a coordination point for substrate. 92-95 provides a ligand contact to substrate; that stretch reads IDGT. The residue at position 168 (Thr-168) is a Phosphothreonine. Substrate contacts are provided by residues 194–196, Glu-213, and Asp-220; that span reads GTA. Residue Asp-220 coordinates Mg(2+).

Belongs to the inositol monophosphatase superfamily. Homodimer. It depends on Mg(2+) as a cofactor.

The protein localises to the cytoplasm. It carries out the reaction a myo-inositol phosphate + H2O = myo-inositol + phosphate. The catalysed reaction is 1D-myo-inositol 1-phosphate + H2O = myo-inositol + phosphate. It catalyses the reaction 1D-myo-inositol 2-phosphate + H2O = myo-inositol + phosphate. The enzyme catalyses 1D-myo-inositol 3-phosphate + H2O = myo-inositol + phosphate. It carries out the reaction 1D-myo-inositol 4-phosphate + H2O = myo-inositol + phosphate. The catalysed reaction is 1D-myo-inositol 5-phosphate + H2O = myo-inositol + phosphate. It catalyses the reaction 1D-myo-inositol 6-phosphate + H2O = myo-inositol + phosphate. The enzyme catalyses scyllo-inositol 1-phosphate + H2O = scyllo-inositol + phosphate. It carries out the reaction alpha-D-galactose 1-phosphate + H2O = D-galactose + phosphate. The catalysed reaction is alpha-D-glucose 1-phosphate + H2O = D-glucose + phosphate. It catalyses the reaction D-glucose 6-phosphate + H2O = D-glucose + phosphate. The enzyme catalyses beta-D-fructose 1-phosphate + H2O = D-fructose + phosphate. It carries out the reaction glycerol 2-phosphate + H2O = glycerol + phosphate. The catalysed reaction is adenosine 2'-phosphate + H2O = adenosine + phosphate. Its pathway is polyol metabolism; myo-inositol biosynthesis; myo-inositol from D-glucose 6-phosphate: step 2/2. With respect to regulation, inhibited by Li(+), Ca(2+) and Mn(2+), but also by Mg(2+) at concentrations above 3 mM. Its function is as follows. Phosphatase involved in the dephosphorylation of myo-inositol monophosphate to generate myo-inositol. Is also able to dephosphorylate scyllo-inositol-phosphate, myo-inositol 1,4-diphosphate, scyllo-inositol-1,3-diphosphate and scyllo-inositol-1,4-diphosphate. Also dephosphorylates in vitro other sugar-phosphates including D-galactose-1-phosphate, glucose-1-phosphate, glucose-6-phosphate, fructose-1-phosphate, beta-glycerophosphate and 2'-AMP. Responsible for the provision of inositol required for synthesis of phosphatidylinositol and polyphosphoinositides, and involved in maintaining normal brain function. Has been implicated as the pharmacological target for lithium Li(+) action in brain. In Pongo abelii (Sumatran orangutan), this protein is Inositol monophosphatase 1 (IMPA1).